Consider the following 200-residue polypeptide: Recombination protein RecR (200 aa).

Residues 58–73 form a C4-type zinc finger; it reads CSICGNITEDDPCPIC. A Toprim domain is found at 81-177; sequence SQILVVEQSQ…KVTRLAHGLS (97 aa).

Belongs to the RecR family.

May play a role in DNA repair. It seems to be involved in an RecBC-independent recombinational process of DNA repair. It may act with RecF and RecO. The protein is Recombination protein RecR of Limosilactobacillus reuteri (strain DSM 20016) (Lactobacillus reuteri).